The sequence spans 141 residues: Large ribosomal subunit protein uL11 (141 aa).

This sequence belongs to the universal ribosomal protein uL11 family. As to quaternary structure, part of the ribosomal stalk of the 50S ribosomal subunit. Interacts with L10 and the large rRNA to form the base of the stalk. L10 forms an elongated spine to which L12 dimers bind in a sequential fashion forming a multimeric L10(L12)X complex. Post-translationally, one or more lysine residues are methylated.

In terms of biological role, forms part of the ribosomal stalk which helps the ribosome interact with GTP-bound translation factors. The sequence is that of Large ribosomal subunit protein uL11 from Gloeobacter violaceus (strain ATCC 29082 / PCC 7421).